Here is an 881-residue protein sequence, read N- to C-terminus: Band 4.1-like protein 1 (881 aa).

At methionine 1 the chain carries N-acetylmethionine. The tract at residues 1 to 88 is disordered; the sequence is MTTETGPDSE…TPSKAQKSPQ (88 aa). Positions 17-35 are enriched in low complexity; that stretch reads EAPQQPEAAAAVTTPVTPA. Position 30 is a phosphothreonine (threonine 30). Positions 38–50 are enriched in basic and acidic residues; it reads GHPEANSNEKHPS. At serine 75 the chain carries Phosphoserine. A compositionally biased stretch (polar residues) spans 76–87; that stretch reads ERTTPSKAQKSP. The residue at position 79 (threonine 79) is a Phosphothreonine. The region spanning 97 to 378 is the FERM domain; it reads AICRVTLLDA…EHHTFFRLVS (282 aa). Tyrosine 343 carries the post-translational modification Phosphotyrosine. Phosphoserine occurs at positions 378, 430, and 437. The tract at residues 428–501 is disordered; it reads SRSLDGAEFS…HKQEFLDKPE (74 aa). A compositionally biased stretch (basic and acidic residues) spans 444-457; it reads ENHDAGPDGDKRDE. Serine 461 and serine 466 each carry phosphoserine. Over residues 466 to 501 the composition is skewed to basic and acidic residues; the sequence is SEAEEGEVRTPTKIKELKPEQETTPRHKQEFLDKPE. Threonine 475 bears the Phosphothreonine mark. Residues 483–541 form a spectrin--actin-binding region; it reads KPEQETTPRHKQEFLDKPEDVLLKHQASINELKRTLKEPNSKLIHRDRDWERERRLPSS. Serine 510 carries the phosphoserine modification. Basic and acidic residues predominate over residues 514 to 538; the sequence is LKRTLKEPNSKLIHRDRDWERERRL. Residues 514-596 form a disordered region; the sequence is LKRTLKEPNS…QERDTVFLKD (83 aa). Phosphoserine occurs at positions 540, 541, 544, and 546. Threonine 550 is modified (phosphothreonine). Basic and acidic residues predominate over residues 550–577; sequence TPEKANERAGLREGSEEKVKPPRPRAPE. Phosphoserine occurs at positions 564 and 578. At threonine 580 the chain carries Phosphothreonine. 7 positions are modified to phosphoserine: serine 639, serine 648, serine 650, serine 667, serine 672, serine 678, and serine 685. The disordered stretch occupies residues 642 to 699; it reads ELDRDKSDSDTEGLLFSRDLNKGAPSQDDESGGIEDSPDRGACSTPDMPQFEPVKTET. Threonine 686 is subject to Phosphothreonine. Phosphoserine occurs at positions 722, 784, and 870. A C-terminal (CTD) region spans residues 746 to 881; the sequence is SITTETISTT…EERDKKPQES (136 aa).

Interacts with AGAP2. Highest expression in brain, lower in heart, kidney, pancreas, placenta, lung and skeletal muscle.

The protein resides in the cytoplasm. The protein localises to the cytoskeleton. Its function is as follows. May function to confer stability and plasticity to neuronal membrane via multiple interactions, including the spectrin-actin-based cytoskeleton, integral membrane channels and membrane-associated guanylate kinases. The chain is Band 4.1-like protein 1 from Homo sapiens (Human).